A 202-amino-acid polypeptide reads, in one-letter code: MATNITWHPNLTYDERKALRKQDGCTIWLTGLSASGKSTIACALEQLLLQKNLSAYRLDGDNIRFGLNKDLGFSEKDRNENIRRISEVSKLFADSCAISITSFISPYRVDRDRARELHKEAGLKFIEIFVDVPLEVAEQRDPKGLYKKAREGVIKEFTGISAPYEAPKAPELHLRTDQKTVEECATIIYEYLISEKIIRKHL.

31–38 contacts ATP; it reads GLSASGKS. Catalysis depends on Ser105, which acts as the Phosphoserine intermediate.

Belongs to the APS kinase family.

The enzyme catalyses adenosine 5'-phosphosulfate + ATP = 3'-phosphoadenylyl sulfate + ADP + H(+). The protein operates within sulfur metabolism; hydrogen sulfide biosynthesis; sulfite from sulfate: step 2/3. Catalyzes the synthesis of activated sulfate. The sequence is that of Adenylyl-sulfate kinase (MET14) from Saccharomyces cerevisiae (strain ATCC 204508 / S288c) (Baker's yeast).